The following is a 263-amino-acid chain: Homeobox protein CDX-1 (263 aa).

The segment at 47 to 108 is disordered; it reads PGINSDPHHG…VQPPGSGLLP (62 aa). The span at 82 to 97 shows a compositional bias: polar residues; it reads SSANPTQIAFSPSDYN. The segment at residues 150–209 is a DNA-binding region (homeobox); the sequence is KDKYRVVYTDHQRLELEKEFHYSRYITIRRKAELAAALGLTERQVKIWFQNRRAKERKVN. An interaction with DNA region spans residues 153-174; the sequence is YRVVYTDHQRLELEKEFHYSRY. Positions 192–203 are interaction with 5-mCpG DNA; the sequence is RQVKIWFQNRRA. The segment covering 204–213 has biased composition (basic residues); sequence KERKVNKKKM. Residues 204–263 form a disordered region; the sequence is KERKVNKKKMQQQSQQASTTTPTPPSVGTTAGMGGLCSSSSSNSNLVSPSSMPIKEEYLS. Low complexity-rich tracts occupy residues 214-233 and 241-254; these read QQQSQQASTTTPTPPSVGTT and SSSSSNSNLVSPSS.

It belongs to the Caudal homeobox family.

The protein localises to the nucleus. In terms of biological role, plays a role in transcriptional regulation. Involved in activated KRAS-mediated transcriptional activation of PRKD1. Binds to the PRKD1 promoter. Could play a role in the terminal differentiation of the intestine. Binds preferentially to methylated DNA. This Xenopus laevis (African clawed frog) protein is Homeobox protein CDX-1 (cdx1).